Here is a 65-residue protein sequence, read N- to C-terminus: Beta-defensin 106A (65 aa).

Positions 1-20 (MRTFLFLFAVLFFLTPAKNA) are cleaved as a signal peptide. 3 disulfide bridges follow: Cys26/Cys53, Cys33/Cys47, and Cys37/Cys54.

Belongs to the beta-defensin family. As to quaternary structure, monomer. Interacts with CCR2 (via extracellular N-terminal region); this interaction may preferentially require specific tyrosine sulfation on CCR2.

It localises to the secreted. It is found in the membrane. Has antibacterial activity. Acts as a ligand for C-C chemokine receptor CCR2. This chain is Beta-defensin 106A (DEFB106A), found in Gorilla gorilla gorilla (Western lowland gorilla).